The chain runs to 267 residues: L-aspartate dehydrogenase (267 aa).

NAD(+)-binding residues include alanine 124 and asparagine 190. Residue histidine 218 is part of the active site.

This sequence belongs to the L-aspartate dehydrogenase family.

It carries out the reaction L-aspartate + NADP(+) + H2O = oxaloacetate + NH4(+) + NADPH + H(+). The enzyme catalyses L-aspartate + NAD(+) + H2O = oxaloacetate + NH4(+) + NADH + H(+). It participates in cofactor biosynthesis; NAD(+) biosynthesis; iminoaspartate from L-aspartate (dehydrogenase route): step 1/1. Specifically catalyzes the NAD or NADP-dependent dehydrogenation of L-aspartate to iminoaspartate. This chain is L-aspartate dehydrogenase, found in Methanococcus maripaludis (strain DSM 14266 / JCM 13030 / NBRC 101832 / S2 / LL).